The sequence spans 277 residues: Thymidylate synthase (277 aa).

Arginine 21 contacts dUMP. Histidine 51 provides a ligand contact to (6R)-5,10-methylene-5,6,7,8-tetrahydrofolate. 126-127 (RR) is a binding site for dUMP. Cysteine 159 functions as the Nucleophile in the catalytic mechanism. DUMP is bound by residues 179 to 182 (RSAD), asparagine 190, and 220 to 222 (HLY). Aspartate 182 is a (6R)-5,10-methylene-5,6,7,8-tetrahydrofolate binding site. (6R)-5,10-methylene-5,6,7,8-tetrahydrofolate is bound at residue serine 276.

Belongs to the thymidylate synthase family. Bacterial-type ThyA subfamily. In terms of assembly, homodimer.

The protein resides in the cytoplasm. The enzyme catalyses dUMP + (6R)-5,10-methylene-5,6,7,8-tetrahydrofolate = 7,8-dihydrofolate + dTMP. It functions in the pathway pyrimidine metabolism; dTTP biosynthesis. Catalyzes the reductive methylation of 2'-deoxyuridine-5'-monophosphate (dUMP) to 2'-deoxythymidine-5'-monophosphate (dTMP) while utilizing 5,10-methylenetetrahydrofolate (mTHF) as the methyl donor and reductant in the reaction, yielding dihydrofolate (DHF) as a by-product. This enzymatic reaction provides an intracellular de novo source of dTMP, an essential precursor for DNA biosynthesis. The sequence is that of Thymidylate synthase from Teredinibacter turnerae (strain ATCC 39867 / T7901).